We begin with the raw amino-acid sequence, 231 residues long: CD302 antigen (231 aa).

Positions 1 to 21 are cleaved as a signal peptide; it reads MSAAVVATLPTLLLLLGLAAA. At 22–169 the chain is on the extracellular side; that stretch reads DCPSSSWVQF…YEKKYLPDHH (148 aa). Positions 31–153 constitute a C-type lectin domain; that stretch reads FQSNCYIFLQ…CEVSSVEGAL (123 aa). N-linked (GlcNAc...) asparagine glycosylation occurs at Asn-110. Cys-129 and Cys-144 are disulfide-bonded. The chain crosses the membrane as a helical span at residues 170-190; sequence ILITALVIASTTILTITGAVV. Topologically, residues 191–231 are cytoplasmic; sequence WFLYKRNLTSGLTNTAYTTAPQLPYNDDCILVDAEENEYVA.

Its subcellular location is the membrane. It is found in the cell projection. The protein localises to the filopodium. The protein resides in the cytoplasm. It localises to the cell cortex. Its subcellular location is the microvillus. In terms of biological role, potential multifunctional C-type lectin receptor that may play roles in endocytosis and phagocytosis as well as in cell adhesion and migration. The protein is CD302 antigen of Trichosurus vulpecula (Brush-tailed possum).